A 1383-amino-acid polypeptide reads, in one-letter code: DNA-directed RNA polymerase subunit beta (1383 aa).

It belongs to the RNA polymerase beta chain family. The RNAP catalytic core consists of 2 alpha, 1 beta, 1 beta' and 1 omega subunit. When a sigma factor is associated with the core the holoenzyme is formed, which can initiate transcription.

The enzyme catalyses RNA(n) + a ribonucleoside 5'-triphosphate = RNA(n+1) + diphosphate. In terms of biological role, DNA-dependent RNA polymerase catalyzes the transcription of DNA into RNA using the four ribonucleoside triphosphates as substrates. The protein is DNA-directed RNA polymerase subunit beta of Bartonella henselae (strain ATCC 49882 / DSM 28221 / CCUG 30454 / Houston 1) (Rochalimaea henselae).